We begin with the raw amino-acid sequence, 498 residues long: ATP synthase subunit beta, chloroplastic (498 aa).

172 to 179 (GGAGVGKT) contributes to the ATP binding site.

The protein belongs to the ATPase alpha/beta chains family. As to quaternary structure, F-type ATPases have 2 components, CF(1) - the catalytic core - and CF(0) - the membrane proton channel. CF(1) has five subunits: alpha(3), beta(3), gamma(1), delta(1), epsilon(1). CF(0) has four main subunits: a(1), b(1), b'(1) and c(9-12).

It localises to the plastid. The protein resides in the chloroplast thylakoid membrane. The catalysed reaction is ATP + H2O + 4 H(+)(in) = ADP + phosphate + 5 H(+)(out). Functionally, produces ATP from ADP in the presence of a proton gradient across the membrane. The catalytic sites are hosted primarily by the beta subunits. This is ATP synthase subunit beta, chloroplastic from Phalaenopsis aphrodite subsp. formosana (Moth orchid).